A 105-amino-acid polypeptide reads, in one-letter code: Cell division protein FtsL (105 aa).

Residues 1-22 lie on the Cytoplasmic side of the membrane; the sequence is MIGNERHGLVGVIGADLIRNAK. A helical membrane pass occupies residues 23–43; the sequence is IPLILLVAVLISAVLVVTTAH. Topologically, residues 44 to 105 are periplasmic; sequence RTRLLTAERE…DPSQENIVIK (62 aa).

This sequence belongs to the FtsL family. In terms of assembly, part of a complex composed of FtsB, FtsL and FtsQ.

The protein localises to the cell inner membrane. Functionally, essential cell division protein. May link together the upstream cell division proteins, which are predominantly cytoplasmic, with the downstream cell division proteins, which are predominantly periplasmic. This chain is Cell division protein FtsL, found in Yersinia pestis.